Consider the following 207-residue polypeptide: dTTP/UTP pyrophosphatase (207 aa).

Aspartate 79 functions as the Proton acceptor in the catalytic mechanism.

It belongs to the Maf family. YhdE subfamily. A divalent metal cation serves as cofactor.

Its subcellular location is the cytoplasm. It catalyses the reaction dTTP + H2O = dTMP + diphosphate + H(+). The catalysed reaction is UTP + H2O = UMP + diphosphate + H(+). Functionally, nucleoside triphosphate pyrophosphatase that hydrolyzes dTTP and UTP. May have a dual role in cell division arrest and in preventing the incorporation of modified nucleotides into cellular nucleic acids. This is dTTP/UTP pyrophosphatase from Rhodopseudomonas palustris (strain ATCC BAA-98 / CGA009).